The primary structure comprises 97 residues: Large ribosomal subunit protein bL27 (97 aa).

Positions 1 to 21 are disordered; it reads MAHKKGVGSSRNGRDSNPKYR.

The protein belongs to the bacterial ribosomal protein bL27 family.

This Gemmatimonas aurantiaca (strain DSM 14586 / JCM 11422 / NBRC 100505 / T-27) protein is Large ribosomal subunit protein bL27.